Here is a 116-residue protein sequence, read N- to C-terminus: Somatostatin (116 aa).

The N-terminal stretch at 1-24 is a signal peptide; that stretch reads MLSCRLQCALAALSIVLALGGVTC. Residues 25–88 constitute a propeptide that is removed on maturation; the sequence is APSDPRLRQF…QDEMRLELQR (64 aa). Ala-43 bears the Alanine amide mark. A disordered region spans residues 62–99; the sequence is QTENDALEPEDLSQAAEQDEMRLELQRSANSNPAMAPR. A disulfide bridge links Cys-105 with Cys-116.

Belongs to the somatostatin family. Post-translationally, C-terminal amidation of the neuronostatin peptide is required for its biological activity, including for the regulation of mean arterial pressure.

Its subcellular location is the secreted. Inhibits the secretion of pituitary hormones, including that of growth hormone/somatotropin (GH1), PRL, ACTH, luteinizing hormone (LH) and TSH. Also impairs ghrelin- and GnRH-stimulated secretion of GH1 and LH; the inhibition of ghrelin-stimulated secretion of GH1 can be further increased by neuronostatin. Its function is as follows. May enhance low-glucose-induced glucagon release by pancreatic alpha cells. This effect may be mediated by binding to GPR107 and PKA activation. May regulate cardiac contractile function. May compromise cardiomyocyte viability. In the central nervous system, may impair memory retention and may affect hippocampal excitability. May also have anxiolytic and anorexigenic effects. May play a role in arterial pressure regulation. May inhibit basal, but not ghrelin- or GnRH-stimulated secretion of GH1 or LH, but does not affect the release of other pituitary hormones, including PRL, ACTH, FSH or TSH. Potentiates inhibitory action of somatostatin on ghrelin-stimulated secretion of GH1, but not that on GnRH-stimulated secretion of LH. This Canis lupus familiaris (Dog) protein is Somatostatin (SST).